The following is a 517-amino-acid chain: Protein disulfide isomerase-like 1-2 (517 aa).

Positions 1–23 (MAVNLVLSFALAILISSSPTAVG) are cleaved as a signal peptide. The 120-residue stretch at 24–143 (VDATEELKEA…IVEYLKRQVG (120 aa)) folds into the Thioredoxin 1 domain. Residue N41 is glycosylated (N-linked (GlcNAc...) asparagine). Active-site nucleophile residues include C61 and C64. C61 and C64 are joined by a disulfide. The N-linked (GlcNAc...) asparagine glycan is linked to N301. The region spanning 357-484 (VEYGNLTPYV…IISFINENRG (128 aa)) is the Thioredoxin 2 domain. Residues C407 and C410 each act as nucleophile in the active site. C407 and C410 are oxidised to a cystine. The Prevents secretion from ER motif lies at 514 to 517 (KDEL).

The protein belongs to the protein disulfide isomerase family.

Its subcellular location is the endoplasmic reticulum lumen. It catalyses the reaction Catalyzes the rearrangement of -S-S- bonds in proteins.. Functionally, acts as a protein-folding catalyst that interacts with nascent polypeptides to catalyze the formation, isomerization, and reduction or oxidation of disulfide bonds. May play a role in storage protein biogenesis. The sequence is that of Protein disulfide isomerase-like 1-2 (PDIL1-2) from Oryza sativa subsp. japonica (Rice).